The primary structure comprises 419 residues: Synaptosomal-associated protein 47 (419 aa).

T-SNARE coiled-coil homology domains follow at residues 109–171 (AANP…LTEL) and 356–418 (KDWP…MRKL).

This sequence belongs to the SVAP1 family. Associates with the BLOC-1 complex. Interacts with BLOC1S6. Forms a complex containing SNAP47, VAMP2 and STX1A.

It is found in the endomembrane system. Its subcellular location is the cytoplasm. It localises to the perinuclear region. May play a role in intracellular membrane fusion. The chain is Synaptosomal-associated protein 47 (Snap47) from Rattus norvegicus (Rat).